Here is a 60-residue protein sequence, read N- to C-terminus: Large ribosomal subunit protein bL32 (60 aa).

The protein belongs to the bacterial ribosomal protein bL32 family.

The sequence is that of Large ribosomal subunit protein bL32 from Streptococcus equi subsp. zooepidemicus (strain MGCS10565).